The sequence spans 497 residues: Protein FAM114A2 (497 aa).

The segment at M1 to A54 is disordered. Residues L19–S34 show a composition bias toward basic and acidic residues. Phosphoserine occurs at positions 84 and 205. The interval V344–K364 is disordered.

The protein belongs to the FAM114 family.

The polypeptide is Protein FAM114A2 (Fam114a2) (Mus musculus (Mouse)).